Here is a 277-residue protein sequence, read N- to C-terminus: Transcription antiterminator LicT (277 aa).

2 consecutive PRD domains span residues 65 to 170 (DIPI…EEMP) and 171 to 277 (NIIN…VKQA).

Belongs to the transcriptional antiterminator BglG family. Post-translationally, phosphorylated.

Mediates positive regulation of the glucanase operon (licST) by functioning as an antiterminator factor of transcription. Prevents termination at terminator lic-t. This chain is Transcription antiterminator LicT (licT), found in Bacillus subtilis (strain 168).